Consider the following 691-residue polypeptide: Hormonally up-regulated neu tumor-associated kinase homolog A (691 aa).

The region spanning 55–313 is the Protein kinase domain; it reads YLIGRKLGEG…IQQALANRWL (259 aa). ATP is bound by residues 61-69 and Lys-84; that span reads LGEGSFAKV. The active-site Proton acceptor is the Asp-179. Residues 406-425 show a composition bias toward basic and acidic residues; it reads MNKNSYEERRSKDLEKRGEP. Disordered stretches follow at residues 406-475, 499-518, 580-640, and 655-679; these read MNKN…GGLS, QSPD…HSQE, FQFD…SRGR, and QVVS…SPGY. The segment covering 440–453 has biased composition (polar residues); the sequence is SHRQNACLTPQGHS. The span at 457 to 470 shows a compositional bias: basic and acidic residues; the sequence is PVKERRSSKSERES. The span at 582–597 shows a compositional bias: polar residues; sequence FDNTSPSKSHFNQASF. Low complexity predominate over residues 604–620; the sequence is SPSSPESMSPTSPHSPS. A compositionally biased stretch (polar residues) spans 621–631; it reads CNNNISGNLGS.

The protein belongs to the protein kinase superfamily. CAMK Ser/Thr protein kinase family. SNF1 subfamily.

It carries out the reaction L-seryl-[protein] + ATP = O-phospho-L-seryl-[protein] + ADP + H(+). The catalysed reaction is L-threonyl-[protein] + ATP = O-phospho-L-threonyl-[protein] + ADP + H(+). The protein is Hormonally up-regulated neu tumor-associated kinase homolog A (hunk-a) of Xenopus laevis (African clawed frog).